Here is a 132-residue protein sequence, read N- to C-terminus: Ribonuclease P protein component 4 (132 aa).

Positions 67, 70, 96, and 99 each coordinate Zn(2+).

Belongs to the eukaryotic/archaeal RNase P protein component 4 family. As to quaternary structure, consists of a catalytic RNA component and at least 4-5 protein subunits. Requires Zn(2+) as cofactor.

The protein resides in the cytoplasm. It catalyses the reaction Endonucleolytic cleavage of RNA, removing 5'-extranucleotides from tRNA precursor.. Functionally, part of ribonuclease P, a protein complex that generates mature tRNA molecules by cleaving their 5'-ends. This chain is Ribonuclease P protein component 4, found in Thermococcus kodakarensis (strain ATCC BAA-918 / JCM 12380 / KOD1) (Pyrococcus kodakaraensis (strain KOD1)).